We begin with the raw amino-acid sequence, 333 residues long: Aquaporin-1 (333 aa).

The interval 1-26 (MQKMSEKPLYRAAENPTRNADRRAGR) is disordered. Helical transmembrane passes span 85 to 105 (LAMFLFMSLLLGGAATAHFTG) and 116 to 136 (FHGFSAVFGIYVGAGVSGGII). The NPA 1 signature appears at 137–139 (NPA). 3 helical membrane-spanning segments follow: residues 156–176 (LVLVSAQYFGSFIASAVVYLI), 213–233 (TGAIFNQIFCTMLLSIGFLSI), and 245–265 (LFPFAVGLLIMTVFLAFSYSA). An NPA 2 motif is present at residues 270–272 (NPA). A helical membrane pass occupies residues 303 to 323 (WLFPYVGALFGAVMYQIFVGV).

This sequence belongs to the MIP/aquaporin (TC 1.A.8) family.

Its subcellular location is the cell membrane. Aquaglyceroporin that may modulate the water content and osmolytes during anhydrobiosis. The chain is Aquaporin-1 from Milnesium tardigradum (Water bear).